A 238-amino-acid chain; its full sequence is tRNA (guanine-N(7)-)-methyltransferase (238 aa).

S-adenosyl-L-methionine contacts are provided by E68, E93, D120, and D143. D143 is a catalytic residue. Substrate contacts are provided by residues K147, D179, and 216 to 219; that span reads TKFE.

Belongs to the class I-like SAM-binding methyltransferase superfamily. TrmB family.

It carries out the reaction guanosine(46) in tRNA + S-adenosyl-L-methionine = N(7)-methylguanosine(46) in tRNA + S-adenosyl-L-homocysteine. The protein operates within tRNA modification; N(7)-methylguanine-tRNA biosynthesis. Its function is as follows. Catalyzes the formation of N(7)-methylguanine at position 46 (m7G46) in tRNA. This Stutzerimonas stutzeri (strain A1501) (Pseudomonas stutzeri) protein is tRNA (guanine-N(7)-)-methyltransferase.